The following is a 505-amino-acid chain: Bifunctional pantoate ligase/cytidylate kinase (505 aa).

Residues 1–268 (MHQWRKHQQS…CGETRLIDHT (268 aa)) form a pantoate--beta-alanine ligase region. 18 to 25 (MGALHRGH) is an ATP binding site. H25 (proton donor) is an active-site residue. A (R)-pantoate-binding site is contributed by Q53. Residue Q53 participates in beta-alanine binding. 142–145 (GEKD) serves as a coordination point for ATP. Q148 lines the (R)-pantoate pocket. ATP contacts are provided by residues V171 and 179-182 (CSSR). The segment at 269 to 505 (FLMSRQPIVA…PEEVWPTAGR (237 aa)) is cytidylate kinase.

The protein in the N-terminal section; belongs to the pantothenate synthetase family. In the C-terminal section; belongs to the cytidylate kinase family. Type 1 subfamily.

It localises to the cytoplasm. The catalysed reaction is (R)-pantoate + beta-alanine + ATP = (R)-pantothenate + AMP + diphosphate + H(+). It carries out the reaction CMP + ATP = CDP + ADP. It catalyses the reaction dCMP + ATP = dCDP + ADP. It participates in cofactor biosynthesis; (R)-pantothenate biosynthesis; (R)-pantothenate from (R)-pantoate and beta-alanine: step 1/1. Its function is as follows. Catalyzes the condensation of pantoate with beta-alanine in an ATP-dependent reaction via a pantoyl-adenylate intermediate. In terms of biological role, catalyzes the transfer of a phosphate group from ATP to either CMP or dCMP to form CDP or dCDP and ADP, respectively. The protein is Bifunctional pantoate ligase/cytidylate kinase of Prochlorococcus marinus (strain MIT 9313).